Here is a 54-residue protein sequence, read N- to C-terminus: Defensin-like protein (54 aa).

Gln1 is modified (pyrrolidone carboxylic acid). Disulfide bonds link Cys4/Cys52, Cys16/Cys37, Cys22/Cys47, and Cys26/Cys49.

Belongs to the DEFL family. Monomer.

The protein localises to the secreted. Taste-modifying protein; sweet-tasting. It is 2000 sweeter than sucrose on a molar basis. Its function is as follows. Has a pH-specific antimicrobial activity against bacteria (B.subtilis, E.coli and S.aureus) and the fungus C.albicans. This chain is Defensin-like protein, found in Pentadiplandra brazzeana.